We begin with the raw amino-acid sequence, 417 residues long: Multifunctional CCA protein (417 aa).

Gly-8 and Arg-11 together coordinate ATP. CTP is bound by residues Gly-8 and Arg-11. The Mg(2+) site is built by Asp-21 and Asp-23. Residues Arg-91, Arg-137, and Arg-140 each coordinate ATP. 3 residues coordinate CTP: Arg-91, Arg-137, and Arg-140. The region spanning 225 to 326 (SGIHTLMTLQ…LNVLKKTDAF (102 aa)) is the HD domain.

It belongs to the tRNA nucleotidyltransferase/poly(A) polymerase family. Bacterial CCA-adding enzyme type 1 subfamily. In terms of assembly, monomer. Can also form homodimers and oligomers. It depends on Mg(2+) as a cofactor. Ni(2+) serves as cofactor.

It carries out the reaction a tRNA precursor + 2 CTP + ATP = a tRNA with a 3' CCA end + 3 diphosphate. It catalyses the reaction a tRNA with a 3' CCA end + 2 CTP + ATP = a tRNA with a 3' CCACCA end + 3 diphosphate. Catalyzes the addition and repair of the essential 3'-terminal CCA sequence in tRNAs without using a nucleic acid template. Adds these three nucleotides in the order of C, C, and A to the tRNA nucleotide-73, using CTP and ATP as substrates and producing inorganic pyrophosphate. tRNA 3'-terminal CCA addition is required both for tRNA processing and repair. Also involved in tRNA surveillance by mediating tandem CCA addition to generate a CCACCA at the 3' terminus of unstable tRNAs. While stable tRNAs receive only 3'-terminal CCA, unstable tRNAs are marked with CCACCA and rapidly degraded. The protein is Multifunctional CCA protein of Neisseria meningitidis serogroup B (strain ATCC BAA-335 / MC58).